The following is a 177-amino-acid chain: RNA pyrophosphohydrolase (177 aa).

The region spanning 6–149 (GYRPNVGIVI…KRDVYRRVMK (144 aa)) is the Nudix hydrolase domain. The Nudix box motif lies at 38–59 (GGINPGESAEQAMYRELFEEVG).

This sequence belongs to the Nudix hydrolase family. RppH subfamily. The cofactor is a divalent metal cation.

Functionally, accelerates the degradation of transcripts by removing pyrophosphate from the 5'-end of triphosphorylated RNA, leading to a more labile monophosphorylated state that can stimulate subsequent ribonuclease cleavage. This chain is RNA pyrophosphohydrolase, found in Cronobacter sakazakii (strain ATCC BAA-894) (Enterobacter sakazakii).